Reading from the N-terminus, the 70-residue chain is Envelope small membrane protein (70 aa).

G2 is lipidated: N-myristoyl glycine; by host. An endoplasmic reticulum retention signal region spans residues 2-15; sequence GSLWSKISQLFVDA. The Virion surface segment spans residues 2–25; the sequence is GSLWSKISQLFVDAFTEFLVSVVD. A helical transmembrane segment spans residues 26–46; the sequence is IVIFLAILFGFTVAGWLLVFL. The Intravirion portion of the chain corresponds to 47–70; that stretch reads LRVVCSALLRSRSAIHSPELSKVL.

This sequence belongs to the arteriviridae E protein family. As to quaternary structure, homooligomer. Associates with itself into higher-order structures, including dimers, trimers and tetramers. Associates with the GP2b-GP3-GP4 complex. In terms of processing, myristoylated. Not glycosylated.

Its subcellular location is the virion membrane. The protein localises to the host endoplasmic reticulum membrane. It localises to the host Golgi apparatus membrane. The protein resides in the secreted. Minor envelope protein. May function as a viroporin in the virion envelope that facilitates uncoating of the virus in order to release the genomic RNA into the cytoplasm for subsequent replication. This Sus scrofa (Pig) protein is Envelope small membrane protein (GP2b).